The primary structure comprises 343 residues: MRDELLNTPTDPLEEKFEEQIRPSRLEDFSGQQRLTDNLRIFIAAARQRGEALDHVLFSGPPGLGKTTLAHIIASELGGGLKITSGPLLDKPGNLAGLLTSLQKGDVLFIDEIHRLTPAVEEYLYSAMEDFRIDILLDSGPSARSVQLRLEPFTLVGATTRAGLLTSPLRARFGISNRLDYYSAELLQRIIIRTATILGIAIDQQAADEIARRSRGTPRIANRLLKRARDFTQVAQSSVISLELARKTLAALEIDEDGLDDMDKKIILSLLQKFDGGPVGISSLAVSVGEEHDTIEEVYEPYLIQTGFIARTPRGRVATKNAYRKFLGVLPGDDGPLFQKGSS.

The interval 1–182 is large ATPase domain (RuvB-L); sequence MRDELLNTPT…FGISNRLDYY (182 aa). ATP-binding positions include Ile21, Arg22, Gly63, Lys66, Thr67, Thr68, 129-131, Arg172, Tyr182, and Arg219; that span reads EDF. Residue Thr67 coordinates Mg(2+). The tract at residues 183–253 is small ATPAse domain (RuvB-S); it reads SAELLQRIII…LARKTLAALE (71 aa). The segment at 256 to 343 is head domain (RuvB-H); sequence EDGLDDMDKK…DGPLFQKGSS (88 aa). Arg311 and Arg316 together coordinate DNA.

Belongs to the RuvB family. In terms of assembly, homohexamer. Forms an RuvA(8)-RuvB(12)-Holliday junction (HJ) complex. HJ DNA is sandwiched between 2 RuvA tetramers; dsDNA enters through RuvA and exits via RuvB. An RuvB hexamer assembles on each DNA strand where it exits the tetramer. Each RuvB hexamer is contacted by two RuvA subunits (via domain III) on 2 adjacent RuvB subunits; this complex drives branch migration. In the full resolvosome a probable DNA-RuvA(4)-RuvB(12)-RuvC(2) complex forms which resolves the HJ.

The protein resides in the cytoplasm. It carries out the reaction ATP + H2O = ADP + phosphate + H(+). In terms of biological role, the RuvA-RuvB-RuvC complex processes Holliday junction (HJ) DNA during genetic recombination and DNA repair, while the RuvA-RuvB complex plays an important role in the rescue of blocked DNA replication forks via replication fork reversal (RFR). RuvA specifically binds to HJ cruciform DNA, conferring on it an open structure. The RuvB hexamer acts as an ATP-dependent pump, pulling dsDNA into and through the RuvAB complex. RuvB forms 2 homohexamers on either side of HJ DNA bound by 1 or 2 RuvA tetramers; 4 subunits per hexamer contact DNA at a time. Coordinated motions by a converter formed by DNA-disengaged RuvB subunits stimulates ATP hydrolysis and nucleotide exchange. Immobilization of the converter enables RuvB to convert the ATP-contained energy into a lever motion, pulling 2 nucleotides of DNA out of the RuvA tetramer per ATP hydrolyzed, thus driving DNA branch migration. The RuvB motors rotate together with the DNA substrate, which together with the progressing nucleotide cycle form the mechanistic basis for DNA recombination by continuous HJ branch migration. Branch migration allows RuvC to scan DNA until it finds its consensus sequence, where it cleaves and resolves cruciform DNA. The polypeptide is Holliday junction branch migration complex subunit RuvB (Prosthecochloris aestuarii (strain DSM 271 / SK 413)).